A 132-amino-acid chain; its full sequence is Small ribosomal subunit protein uS8 (132 aa).

This sequence belongs to the universal ribosomal protein uS8 family. Part of the 30S ribosomal subunit. Contacts proteins S5 and S12.

In terms of biological role, one of the primary rRNA binding proteins, it binds directly to 16S rRNA central domain where it helps coordinate assembly of the platform of the 30S subunit. The protein is Small ribosomal subunit protein uS8 of Treponema pallidum (strain Nichols).